Consider the following 281-residue polypeptide: Homeobox protein Hox-A5 (281 aa).

Disordered regions lie at residues 65–144 (VGNE…PCSS) and 162–183 (PLEEEKPAGSAPTTPQNVSDST). Composition is skewed to polar residues over residues 68–99 (ERTQGYSPSHSAATTPSVEPVRYTQSANSTGT) and 114–127 (VASSSPVTETQSQH). Residues 132–144 (NSITTPCSTPCSS) are compositionally biased toward low complexity. A compositionally biased stretch (polar residues) spans 172–183 (APTTPQNVSDST). The Antp-type hexapeptide signature appears at 187-192 (IYPWMR). The segment at residues 205-264 (GKRARTAYTRYQTLELEKEFHFNRYLTRRRRIEIAHALCLSERQIKIWFQNRRMKWKKDN) is a DNA-binding region (homeobox).

Belongs to the Antp homeobox family.

Its subcellular location is the nucleus. Functionally, sequence-specific transcription factor which is part of a developmental regulatory system that provides cells with specific positional identities on the anterior-posterior axis. The protein is Homeobox protein Hox-A5 (hoxa5) of Morone saxatilis (Striped bass).